We begin with the raw amino-acid sequence, 155 residues long: MEVVIKISTTEAKKYLLIDTSVLPDVFEEVIQVKELLRSAKVKDITEAVKKVGISRSTYYKYKDYVFNVSDGLKSQKVTISILIEHRRGTLSEVLDKLAQRCCNILTINQDIPINNTANVNITFDISGISGDVKNIVEELKKIKNVLKVEIVAME.

Residues 79 to 154 (TISILIEHRR…NVLKVEIVAM (76 aa)) enclose the ACT domain.

Belongs to the UPF0735 family.

The protein is UPF0735 ACT domain-containing protein CA_C1234 of Clostridium acetobutylicum (strain ATCC 824 / DSM 792 / JCM 1419 / IAM 19013 / LMG 5710 / NBRC 13948 / NRRL B-527 / VKM B-1787 / 2291 / W).